Here is a 92-residue protein sequence, read N- to C-terminus: UPF0213 protein M28_Spy1146 (92 aa).

Residues 4-80 (KKAYMYVLEC…KRKTRSQKLA (77 aa)) form the GIY-YIG domain.

Belongs to the UPF0213 family.

The polypeptide is UPF0213 protein M28_Spy1146 (Streptococcus pyogenes serotype M28 (strain MGAS6180)).